Here is a 639-residue protein sequence, read N- to C-terminus: Chaperone protein DnaK (639 aa).

Threonine 198 carries the post-translational modification Phosphothreonine; by autocatalysis. Low complexity predominate over residues 603-618; the sequence is AKAQTQGGAQEGAAKQ. Residues 603–639 are disordered; the sequence is AKAQTQGGAQEGAAKQSNATADDVVDAEFEEVKDDKK. A compositionally biased stretch (acidic residues) spans 625–639; it reads DVVDAEFEEVKDDKK.

This sequence belongs to the heat shock protein 70 family.

Acts as a chaperone. The polypeptide is Chaperone protein DnaK (Shewanella sp. (strain MR-7)).